A 242-amino-acid polypeptide reads, in one-letter code: Probable septum site-determining protein MinC (242 aa).

Belongs to the MinC family. In terms of assembly, interacts with MinD and FtsZ.

Functionally, cell division inhibitor that blocks the formation of polar Z ring septums. Rapidly oscillates between the poles of the cell to destabilize FtsZ filaments that have formed before they mature into polar Z rings. Prevents FtsZ polymerization. The protein is Probable septum site-determining protein MinC of Agrobacterium fabrum (strain C58 / ATCC 33970) (Agrobacterium tumefaciens (strain C58)).